Consider the following 703-residue polypeptide: Stonustoxin subunit alpha (703 aa).

The structural MACPF/CDC pore-forming domain stretch occupies residues 2 to 265; sequence SSDLVMPALG…KAQQLIQEIN (264 aa). Residues 266–385 form a structural FAT domain region; that stretch reads VSKVRRIHTT…GMVEGTQAKF (120 aa). The interval 386–517 is thioredoxin (THX) domain; sequence VSNQTELDRE…PRMPFVQGYK (132 aa). One can recognise a B30.2/SPRY domain in the interval 508–703; the sequence is PRMPFVQGYK…AGNHGTLRLL (196 aa).

Belongs to the SNTX/VTX toxin family. In terms of assembly, heterodimer of alpha and beta subunits; non-covalently linked. In terms of processing, intrachain disulfide bonds may be present in the heterodimer. Post-translationally, not glycosylated. Expressed by the venom gland.

It localises to the secreted. This lethal (towards mammals) heterodimer induces hemolytic activities due to its ability to form pores in the cell membrane. The pore may be composed of 10 SNTX-alpha/beta heterodimers. The toxin elicits potent hypotension which is endothelium-dependent and appears to be mediated by the nitric oxide pathway and activation of potassium channels. In addition, it displays edema-inducing activities, increases vascular permeability. It also shows myotoxic activities and interferes irreversibly with neuromuscular function. It also induces irreversible platelet aggregation in rabbit or rat (but not in human or mouse) whole blood. In addition, it has been observed to increase spontaneous quantal acetylcholine release from isolated frog cutaneous pectoris motor endings. The polypeptide is Stonustoxin subunit alpha (Synanceia horrida (Estuarine stonefish)).